Reading from the N-terminus, the 431-residue chain is Glutamate-1-semialdehyde 2,1-aminomutase (431 aa).

Lys265 carries the N6-(pyridoxal phosphate)lysine modification.

The protein belongs to the class-III pyridoxal-phosphate-dependent aminotransferase family. HemL subfamily. In terms of assembly, homodimer. Pyridoxal 5'-phosphate serves as cofactor.

Its subcellular location is the cytoplasm. The catalysed reaction is (S)-4-amino-5-oxopentanoate = 5-aminolevulinate. It participates in porphyrin-containing compound metabolism; protoporphyrin-IX biosynthesis; 5-aminolevulinate from L-glutamyl-tRNA(Glu): step 2/2. The polypeptide is Glutamate-1-semialdehyde 2,1-aminomutase (Vibrio vulnificus (strain YJ016)).